We begin with the raw amino-acid sequence, 94 residues long: Adaptation to cold protein J (94 aa).

Residues asparagine 3–tyrosine 93 enclose the J domain. An essential for interaction with AtcC region spans residues asparagine 74–proline 94.

Interacts via its C-terminal extension with AtcC. Does not interact with AtcA and AtcB.

In terms of biological role, involved in cold adaptation. The J-domain is functional and can stimulate the ATPase activity of the DnaK chaperone. May work as a co-chaperone of the DnaK system to support cold resistance. The polypeptide is Adaptation to cold protein J (Shewanella oneidensis (strain ATCC 700550 / JCM 31522 / CIP 106686 / LMG 19005 / NCIMB 14063 / MR-1)).